The primary structure comprises 370 residues: GTPase Obg (370 aa).

An Obg domain is found at 1–159 (MKFIDEARIE…RKLKLELKVL (159 aa)). A disordered region spans residues 129–148 (HFKSSTNRAPRQKTNGKSGE). The segment covering 130–145 (FKSSTNRAPRQKTNGK) has biased composition (polar residues). Residues 160-334 (ADVGLLGMPN…LCYSLQDYLD (175 aa)) form the OBG-type G domain. GTP contacts are provided by residues 166 to 173 (GMPNAGKS), 191 to 195 (FTTLH), 213 to 216 (DIPG), 284 to 287 (NKVD), and 315 to 317 (SAL). Mg(2+) contacts are provided by Ser-173 and Thr-193.

It belongs to the TRAFAC class OBG-HflX-like GTPase superfamily. OBG GTPase family. As to quaternary structure, monomer. The cofactor is Mg(2+).

The protein localises to the cytoplasm. Functionally, an essential GTPase which binds GTP, GDP and possibly (p)ppGpp with moderate affinity, with high nucleotide exchange rates and a fairly low GTP hydrolysis rate. Plays a role in control of the cell cycle, stress response, ribosome biogenesis and in those bacteria that undergo differentiation, in morphogenesis control. The sequence is that of GTPase Obg from Polynucleobacter necessarius subsp. necessarius (strain STIR1).